A 308-amino-acid polypeptide reads, in one-letter code: uncharacterized protein (308 aa).

The region spanning 6-234 is the ABC transporter domain; it reads LHIEGLDKKI…TEKAIIEVQP (229 aa). Position 38–45 (38–45) interacts with ATP; that stretch reads GPNGSGKT.

Belongs to the ABC transporter superfamily.

This is an uncharacterized protein from Bacillus subtilis (strain 168).